The primary structure comprises 266 residues: Putative tyrosine phosphatase 197R (266 aa).

In terms of domain architecture, Tyrosine-protein phosphatase spans 15–167 (RPTLGSLSDK…LFGSQNINND (153 aa)). Cys111 functions as the Phosphocysteine intermediate in the catalytic mechanism.

It belongs to the protein-tyrosine phosphatase family.

The catalysed reaction is O-phospho-L-tyrosyl-[protein] + H2O = L-tyrosyl-[protein] + phosphate. The chain is Putative tyrosine phosphatase 197R from Invertebrate iridescent virus 6 (IIV-6).